The chain runs to 365 residues: Putative 2-dehydropantoate 2-reductase (365 aa).

The protein belongs to the ketopantoate reductase family.

It carries out the reaction (R)-pantoate + NADP(+) = 2-dehydropantoate + NADPH + H(+). Its pathway is cofactor biosynthesis; (R)-pantothenate biosynthesis; (R)-pantoate from 3-methyl-2-oxobutanoate: step 2/2. In terms of biological role, catalyzes the NADPH-dependent reduction of ketopantoate into pantoic acid. This chain is Putative 2-dehydropantoate 2-reductase (KPR), found in Arabidopsis thaliana (Mouse-ear cress).